A 389-amino-acid polypeptide reads, in one-letter code: Chalcone synthase A (389 aa).

Cys-164 is an active-site residue.

It belongs to the thiolase-like superfamily. Chalcone/stilbene synthases family. In terms of tissue distribution, major expressed member of the gene family in various floral tissues and in seedlings treated with UV light. It is relatively low expressed in tissue culture material.

It carries out the reaction (E)-4-coumaroyl-CoA + 3 malonyl-CoA + 3 H(+) = 2',4,4',6'-tetrahydroxychalcone + 3 CO2 + 4 CoA. Its pathway is secondary metabolite biosynthesis; flavonoid biosynthesis. Functionally, the primary product of this enzyme is 4,2',4',6'-tetrahydroxychalcone (also termed naringenin-chalcone or chalcone) which can under specific conditions spontaneously isomerize into naringenin. The chain is Chalcone synthase A (CHSA) from Petunia hybrida (Petunia).